Reading from the N-terminus, the 413-residue chain is GRTGAGFTLLTLLLLLPQPTSQFWLFNVLFPPTTTPEAPPTNSTPPWCLVPGFLGNQLEAKLDKPDVVNWMCYRKTEDYFTIWLNLNTFLPVGVDCWIDNTRVVYNRTARKMTNAPGVHIRVPGFGKTYSVEYLDQSKLAGYLHTLVQNLVNNGYVRDQTVRAAPYDWRVGPQEQPEYFQNLKALIEEMHDEYQQRVFLIGHSMGNLNVLYFLLQQKQAWKDQYIGGFISLGAPWGGSVKPLRVLASGDNQGIPLMSNIKLREEQRMTTTSPWMFPTSLAWPEDHVFISTPSYNYTYRDYQRFFTDVNLEDGWYMWEDMKDLLKGLPPPGVDTYCLYGTGYPTVETYIYDEHFPYEDPVDMIYGDGDDTVNKRSSELCKRWRNQQKQKVHVQELRGIDHLNMVFSNLTLTLHQ.

An N-terminal signal peptide occupies residues 1–22 (GRTGAGFTLLTLLLLLPQPTSQ). C72 and C96 are disulfide-bonded. N106 is a glycosylation site (N-linked (GlcNAc...) asparagine). S203 functions as the Charge relay system in the catalytic mechanism. S203 acts as the Nucleophile in catalysis. N-linked (GlcNAc...) asparagine glycosylation is present at N294. C335 and C378 are oxidised to a cystine. Active-site charge relay system residues include D367 and H399. Residue N406 is glycosylated (N-linked (GlcNAc...) asparagine).

The protein belongs to the AB hydrolase superfamily. Lipase family. In terms of tissue distribution, detected in blood plasma (at protein level). Expressed in liver, brain and adrenal glands. Lower expression in testes. In laying hens, expressed higher in brain than in liver. In roosters, higher levels in liver than in brain.

The protein localises to the secreted. The catalysed reaction is a sterol + a 1,2-diacyl-sn-glycero-3-phosphocholine = a sterol ester + a 1-acyl-sn-glycero-3-phosphocholine. Its activity is regulated as follows. APOA1 is the most potent activator in plasma. Also activated by APOE, APOC1 and APOA4. Its function is as follows. Central enzyme in the extracellular metabolism of plasma lipoproteins. Synthesized mainly in the liver and secreted into plasma where it converts cholesterol and phosphatidylcholines (lecithins) to cholesteryl esters and lysophosphatidylcholines on the surface of high and low density lipoproteins (HDLs and LDLs). The cholesterol ester is then transported back to the liver. Also produced in the brain by primary astrocytes, and esterifies free cholesterol on nascent APOE-containing lipoproteins secreted from glia and influences cerebral spinal fluid (CSF) APOE- and APOA1 levels. Together with APOE and the cholesterol transporter ABCA1, plays a key role in the maturation of glial-derived, nascent lipoproteins. Required for remodeling high-density lipoprotein particles into their spherical forms. Has a preference for plasma 16:0-18:2 or 18:O-18:2 phosphatidylcholines. The protein is Phosphatidylcholine-sterol acyltransferase (LCAT) of Gallus gallus (Chicken).